A 666-amino-acid polypeptide reads, in one-letter code: Peptidase S41 family protein phomP1 (666 aa).

Positions 1–27 (MSSFLVQTAVVRLFLLGVVFWFPFALS) are cleaved as a signal peptide. Residues asparagine 70, asparagine 214, and asparagine 234 are each glycosylated (N-linked (GlcNAc...) asparagine). A peptidase S41 domain region spans residues 303–504 (DVAVLQITSF…LLQAQGVRTV (202 aa)). 2 N-linked (GlcNAc...) asparagine glycosylation sites follow: asparagine 555 and asparagine 612.

It belongs to the peptidase S41A family.

Its pathway is mycotoxin biosynthesis. Its function is as follows. Peptidase S41 family protein; part of the gene cluster that mediates the biosynthesis of the phomopsins, a group of hexapeptide mycotoxins which infects lupins and causes lupinosis disease in livestock. Within the pathway, phomP1 and phomP1' are probably involved in the processing of the phomA and phomA' precursors. The pathway starts with the processing of the precursor phomA by several endopeptidases including kexin proteases as well as the cluster-specific S41 family peptidase phomP1 and the oligopeptidase phomG to produce 10 identical copies of the hexapeptide Tyr-Val-Ile-Pro-Ile-Asp. After being excised from the precursor peptide, the core peptides are cyclized and modified post-translationally by enzymes encoded within the gene cluster. The timing and order of proteolysis of the phomA precursor and PTMs are still unknown. Two tyrosinase-like enzymes, phomQ1 and phomQ2, catalyze the chlorination and hydroxylation of Tyr, respectively. PhomYb, is proposed to be involved in the construction of the macrocyclic structure. The other 4 ustYa family proteins may be involved in PTMs that generate the unique structure of phomopsin A. PhomYa is required for the hydroxylation of C-beta of Tyr. PhomYc, phomYd, and phomYe are responsible for the biosynthesis of 2,3-dehydroisoleucine (dIle), 2,3-dehydroaspartic acid (dAsp), and 3,4-dehydroproline (dPro), respectively. While dIle formation by phomYc is indispensable for the installation of dAsp by phomYd, the order of the other PTMs have not been elucidated yet. Most of the biosynthetic enzymes likely have broad substrate specificity, and thus, there might be a metabolic grid from a precursor to phomopsin A. The enzyme(s) responsible for the biosynthesis of 3,4-dehydrovaline (dVal) have also not been identified yet. Finally, phomM acts as an S-adenosylmethionine-dependent alpha-N-methyltransferase that catalyzes two successive N-methylation reactions, converting N-desmethyl-phomopsin A to phomopsin A and phomopsin A further to an N,N-dimethylated congener called phomopsin E. The sequence is that of Peptidase S41 family protein phomP1 from Diaporthe leptostromiformis (Lupinosis disease fungus).